Reading from the N-terminus, the 468-residue chain is Glutamate--tRNA ligase (468 aa).

Residues 8–18 (PSPTGFLHVGG) carry the 'HIGH' region motif. The Zn(2+) site is built by Cys97, Cys99, Cys124, and Asp126. Positions 236–240 (KLSKR) match the 'KMSKS' region motif. Lys239 contributes to the ATP binding site.

The protein belongs to the class-I aminoacyl-tRNA synthetase family. Glutamate--tRNA ligase type 1 subfamily. Monomer. The cofactor is Zn(2+).

It is found in the cytoplasm. It catalyses the reaction tRNA(Glu) + L-glutamate + ATP = L-glutamyl-tRNA(Glu) + AMP + diphosphate. Functionally, catalyzes the attachment of glutamate to tRNA(Glu) in a two-step reaction: glutamate is first activated by ATP to form Glu-AMP and then transferred to the acceptor end of tRNA(Glu). In Francisella tularensis subsp. holarctica (strain FTNF002-00 / FTA), this protein is Glutamate--tRNA ligase.